A 250-amino-acid polypeptide reads, in one-letter code: UDP-2,3-diacylglucosamine hydrolase (250 aa).

Mn(2+)-binding residues include Asp8, His10, Asp41, Asn79, and His114. Residue 79–80 coordinates substrate; it reads NR. The substrate site is built by Asp122, Ser160, Gln167, and His195. Mn(2+) contacts are provided by His195 and His197.

It belongs to the LpxH family. Requires Mn(2+) as cofactor.

The protein localises to the cell inner membrane. It carries out the reaction UDP-2-N,3-O-bis[(3R)-3-hydroxytetradecanoyl]-alpha-D-glucosamine + H2O = 2-N,3-O-bis[(3R)-3-hydroxytetradecanoyl]-alpha-D-glucosaminyl 1-phosphate + UMP + 2 H(+). It functions in the pathway glycolipid biosynthesis; lipid IV(A) biosynthesis; lipid IV(A) from (3R)-3-hydroxytetradecanoyl-[acyl-carrier-protein] and UDP-N-acetyl-alpha-D-glucosamine: step 4/6. Functionally, hydrolyzes the pyrophosphate bond of UDP-2,3-diacylglucosamine to yield 2,3-diacylglucosamine 1-phosphate (lipid X) and UMP by catalyzing the attack of water at the alpha-P atom. Involved in the biosynthesis of lipid A, a phosphorylated glycolipid that anchors the lipopolysaccharide to the outer membrane of the cell. This is UDP-2,3-diacylglucosamine hydrolase from Nitrosococcus oceani (strain ATCC 19707 / BCRC 17464 / JCM 30415 / NCIMB 11848 / C-107).